A 108-amino-acid polypeptide reads, in one-letter code: Urease subunit beta (108 aa).

Belongs to the urease beta subunit family. Heterotrimer of UreA (gamma), UreB (beta) and UreC (alpha) subunits. Three heterotrimers associate to form the active enzyme.

The protein localises to the cytoplasm. The enzyme catalyses urea + 2 H2O + H(+) = hydrogencarbonate + 2 NH4(+). The protein operates within nitrogen metabolism; urea degradation; CO(2) and NH(3) from urea (urease route): step 1/1. The sequence is that of Urease subunit beta from Nocardia farcinica (strain IFM 10152).